The chain runs to 42 residues: Photosystem II reaction center protein J (42 aa).

A helical membrane pass occupies residues 10-30 (IPLWLVGTVAGTAALTLVAVF).

Belongs to the PsbJ family. In terms of assembly, PSII is composed of 1 copy each of membrane proteins PsbA, PsbB, PsbC, PsbD, PsbE, PsbF, PsbH, PsbI, PsbJ, PsbK, PsbL, PsbM, PsbT, PsbX, PsbY, PsbZ, Psb30/Ycf12, at least 3 peripheral proteins of the oxygen-evolving complex and a large number of cofactors. It forms dimeric complexes.

The protein resides in the plastid. It is found in the chloroplast thylakoid membrane. Functionally, one of the components of the core complex of photosystem II (PSII). PSII is a light-driven water:plastoquinone oxidoreductase that uses light energy to abstract electrons from H(2)O, generating O(2) and a proton gradient subsequently used for ATP formation. It consists of a core antenna complex that captures photons, and an electron transfer chain that converts photonic excitation into a charge separation. This Chlorella vulgaris (Green alga) protein is Photosystem II reaction center protein J.